An 886-amino-acid polypeptide reads, in one-letter code: Leucine--tRNA ligase (886 aa).

Positions 46-56 match the 'HIGH' region motif; the sequence is PYPSGKLHMGH. A 'KMSKS' region motif is present at residues 638-642; the sequence is TMSKS. Lys641 is an ATP binding site.

This sequence belongs to the class-I aminoacyl-tRNA synthetase family.

The protein localises to the cytoplasm. It catalyses the reaction tRNA(Leu) + L-leucine + ATP = L-leucyl-tRNA(Leu) + AMP + diphosphate. The protein is Leucine--tRNA ligase of Polaromonas sp. (strain JS666 / ATCC BAA-500).